We begin with the raw amino-acid sequence, 601 residues long: RNA-binding protein MEX3B (601 aa).

2 disordered regions span residues 1–39 and 90–109; these read MPSS…DDQR and GRQG…ISPT. The residue at position 4 (Ser-4) is a Phosphoserine. Residues 13 to 33 are compositionally biased toward gly residues; sequence GSGGGGGGGGGGGGGGSGGGE. KH domains lie at 98–159 and 192–253; these read DGDR…RREI and QTTI…REEI. Disordered regions lie at residues 284–332 and 344–448; these read LHHG…TDSY and TSRL…GGAS. Residue Ser-320 is modified to Phosphoserine. Composition is skewed to low complexity over residues 320-331 and 362-371; these read SSSSLGSASTDS and NGNNNNNGNG. Positions 395-404 are enriched in pro residues; sequence DPAPAPPPGT. Over residues 420–442 the composition is skewed to low complexity; it reads AAPVSSSCSSSASSSASSSSVVF. Phosphoserine is present on Ser-494. The segment at 514 to 546 is disordered; the sequence is LPGLPSSDTSGSSSSSSSSSSSSSSSSGLRRKG. Residues 519–540 are compositionally biased toward low complexity; that stretch reads SSDTSGSSSSSSSSSSSSSSSS. The segment at 550-590 adopts an RING-type zinc-finger fold; that stretch reads CSVCFESEVIAALVPCGHNLFCMECANRICEKSEPECPVCH.

Phosphorylation at Ser-494 creates a docking site for 14-3-3, which stabilizes the protein and modulates its ability to bind RNA.

It localises to the cytoplasm. Its subcellular location is the nucleus. It is found in the P-body. The protein resides in the cytoplasmic granule. RNA-binding protein. May be involved in post-transcriptional regulatory mechanisms. This is RNA-binding protein MEX3B (Mex3b) from Mus musculus (Mouse).